A 280-amino-acid chain; its full sequence is Phosphatidylserine decarboxylase proenzyme (280 aa).

Active-site charge relay system; for autoendoproteolytic cleavage activity residues include D88, H144, and S247. Catalysis depends on S247, which acts as the Schiff-base intermediate with substrate; via pyruvic acid; for decarboxylase activity. Pyruvic acid (Ser); by autocatalysis is present on S247.

The protein belongs to the phosphatidylserine decarboxylase family. PSD-B subfamily. Prokaryotic type I sub-subfamily. As to quaternary structure, heterodimer of a large membrane-associated beta subunit and a small pyruvoyl-containing alpha subunit. The cofactor is pyruvate. Post-translationally, is synthesized initially as an inactive proenzyme. Formation of the active enzyme involves a self-maturation process in which the active site pyruvoyl group is generated from an internal serine residue via an autocatalytic post-translational modification. Two non-identical subunits are generated from the proenzyme in this reaction, and the pyruvate is formed at the N-terminus of the alpha chain, which is derived from the carboxyl end of the proenzyme. The autoendoproteolytic cleavage occurs by a canonical serine protease mechanism, in which the side chain hydroxyl group of the serine supplies its oxygen atom to form the C-terminus of the beta chain, while the remainder of the serine residue undergoes an oxidative deamination to produce ammonia and the pyruvoyl prosthetic group on the alpha chain. During this reaction, the Ser that is part of the protease active site of the proenzyme becomes the pyruvoyl prosthetic group, which constitutes an essential element of the active site of the mature decarboxylase.

The protein localises to the cell membrane. The enzyme catalyses a 1,2-diacyl-sn-glycero-3-phospho-L-serine + H(+) = a 1,2-diacyl-sn-glycero-3-phosphoethanolamine + CO2. Its pathway is phospholipid metabolism; phosphatidylethanolamine biosynthesis; phosphatidylethanolamine from CDP-diacylglycerol: step 2/2. Catalyzes the formation of phosphatidylethanolamine (PtdEtn) from phosphatidylserine (PtdSer). The polypeptide is Phosphatidylserine decarboxylase proenzyme (Xanthomonas euvesicatoria pv. vesicatoria (strain 85-10) (Xanthomonas campestris pv. vesicatoria)).